We begin with the raw amino-acid sequence, 724 residues long: Catalase-peroxidase (724 aa).

A cross-link (tryptophyl-tyrosyl-methioninium (Trp-Tyr) (with M-251)) is located at residues 96–225 (WHAAGTYRVA…LAAVMMGLIY (130 aa)). The active-site Proton acceptor is His97. The segment at residues 225–251 (YVNPEGVDGNPDPLRTAEDVRITFERM) is a cross-link (tryptophyl-tyrosyl-methioninium (Tyr-Met) (with W-96)). His266 provides a ligand contact to heme b.

Belongs to the peroxidase family. Peroxidase/catalase subfamily. As to quaternary structure, homodimer or homotetramer. Heme b is required as a cofactor. Formation of the three residue Trp-Tyr-Met cross-link is important for the catalase, but not the peroxidase activity of the enzyme.

It carries out the reaction H2O2 + AH2 = A + 2 H2O. It catalyses the reaction 2 H2O2 = O2 + 2 H2O. Bifunctional enzyme with both catalase and broad-spectrum peroxidase activity. In Halorhodospira halophila (strain DSM 244 / SL1) (Ectothiorhodospira halophila (strain DSM 244 / SL1)), this protein is Catalase-peroxidase.